The following is a 173-amino-acid chain: Archaemetzincin (173 aa).

Zn(2+) is bound at residue His-130. Glu-131 (proton acceptor) is an active-site residue. The Zn(2+) site is built by His-134, His-140, Cys-141, Cys-146, Cys-165, and Cys-168.

This sequence belongs to the peptidase M54 family. As to quaternary structure, monomer. It depends on Zn(2+) as a cofactor.

Functionally, probable zinc metalloprotease whose natural substrate is unknown. The polypeptide is Archaemetzincin (Halobacterium salinarum (strain ATCC 29341 / DSM 671 / R1)).